We begin with the raw amino-acid sequence, 212 residues long: Probable GTP-binding protein EngB (212 aa).

Residues 38–210 (ALPQIAFVGK…KTSLAKCIKL (173 aa)) enclose the EngB-type G domain. Residues 46–53 (GKSNVGKS), 73–77 (GRTRQ), 91–94 (DLPG), 158–161 (TKSD), and 189–191 (VSS) contribute to the GTP site. Ser-53 and Thr-75 together coordinate Mg(2+).

The protein belongs to the TRAFAC class TrmE-Era-EngA-EngB-Septin-like GTPase superfamily. EngB GTPase family. The cofactor is Mg(2+).

Necessary for normal cell division and for the maintenance of normal septation. In Rickettsia bellii (strain OSU 85-389), this protein is Probable GTP-binding protein EngB.